We begin with the raw amino-acid sequence, 408 residues long: ORC1-type DNA replication protein 15 (408 aa).

ATP is bound by residues 60–64, Tyr-208, and Arg-220; that span reads VGKTA.

This sequence belongs to the CDC6/cdc18 family.

Its function is as follows. Involved in regulation of DNA replication. The protein is ORC1-type DNA replication protein 15 (cdc6o) of Haloarcula marismortui (strain ATCC 43049 / DSM 3752 / JCM 8966 / VKM B-1809) (Halobacterium marismortui).